A 485-amino-acid chain; its full sequence is Inosine-5'-monophosphate dehydrogenase (485 aa).

2 CBS domains span residues 95–154 and 155–215; these read VITN…IDDV and MTKE…AKDS. NAD(+)-binding positions include aspartate 249 and 299 to 301; that span reads GIG. Residues glycine 301 and glycine 303 each coordinate K(+). Serine 304 contacts IMP. A K(+)-binding site is contributed by cysteine 306. Catalysis depends on cysteine 306, which acts as the Thioimidate intermediate. IMP-binding positions include 339-341, 362-363, and 386-390; these read DGG, GS, and YRGMG. Arginine 402 functions as the Proton acceptor in the catalytic mechanism. Residue glutamate 414 participates in IMP binding. The K(+) site is built by glutamate 468, serine 469, and histidine 470.

It belongs to the IMPDH/GMPR family. As to quaternary structure, homotetramer. K(+) is required as a cofactor.

The enzyme catalyses IMP + NAD(+) + H2O = XMP + NADH + H(+). It functions in the pathway purine metabolism; XMP biosynthesis via de novo pathway; XMP from IMP: step 1/1. Its activity is regulated as follows. Mycophenolic acid (MPA) is a non-competitive inhibitor that prevents formation of the closed enzyme conformation by binding to the same site as the amobile flap. In contrast, mizoribine monophosphate (MZP) is a competitive inhibitor that induces the closed conformation. MPA is a potent inhibitor of mammalian IMPDHs but a poor inhibitor of the bacterial enzymes. MZP is a more potent inhibitor of bacterial IMPDH. Its function is as follows. Catalyzes the conversion of inosine 5'-phosphate (IMP) to xanthosine 5'-phosphate (XMP), the first committed and rate-limiting step in the de novo synthesis of guanine nucleotides, and therefore plays an important role in the regulation of cell growth. The sequence is that of Inosine-5'-monophosphate dehydrogenase from Halalkalibacterium halodurans (strain ATCC BAA-125 / DSM 18197 / FERM 7344 / JCM 9153 / C-125) (Bacillus halodurans).